We begin with the raw amino-acid sequence, 122 residues long: MSGKHPLVQAIENSQLKTDLPEFAPGDTVVVQVKVKEGDRERLQAFEGVVIAKKNRGLNSAFTVRKISSGVGVERVFQTHSPVVAKIEVKRRGDVRRAKLYYLRDLSGKAARIREKLPARKA.

The protein belongs to the bacterial ribosomal protein bL19 family.

In terms of biological role, this protein is located at the 30S-50S ribosomal subunit interface and may play a role in the structure and function of the aminoacyl-tRNA binding site. This is Large ribosomal subunit protein bL19 from Acinetobacter baumannii (strain AB307-0294).